The primary structure comprises 483 residues: UDP-N-acetylmuramoyl-L-alanyl-D-glutamate--2,6-diaminopimelate ligase (483 aa).

Residue Ser30 participates in UDP-N-acetyl-alpha-D-muramoyl-L-alanyl-D-glutamate binding. Position 109 to 115 (109 to 115 (GTNGKTT)) interacts with ATP. UDP-N-acetyl-alpha-D-muramoyl-L-alanyl-D-glutamate contacts are provided by residues 151-152 (TT), Ser178, and Arg186. Lys218 bears the N6-carboxylysine mark. Meso-2,6-diaminopimelate contacts are provided by residues Arg380, 403–406 (DNPR), Gly453, and Glu457. The Meso-diaminopimelate recognition motif motif lies at 403–406 (DNPR).

It belongs to the MurCDEF family. MurE subfamily. It depends on Mg(2+) as a cofactor. Carboxylation is probably crucial for Mg(2+) binding and, consequently, for the gamma-phosphate positioning of ATP.

It is found in the cytoplasm. It carries out the reaction UDP-N-acetyl-alpha-D-muramoyl-L-alanyl-D-glutamate + meso-2,6-diaminopimelate + ATP = UDP-N-acetyl-alpha-D-muramoyl-L-alanyl-gamma-D-glutamyl-meso-2,6-diaminopimelate + ADP + phosphate + H(+). It participates in cell wall biogenesis; peptidoglycan biosynthesis. Functionally, catalyzes the addition of meso-diaminopimelic acid to the nucleotide precursor UDP-N-acetylmuramoyl-L-alanyl-D-glutamate (UMAG) in the biosynthesis of bacterial cell-wall peptidoglycan. The polypeptide is UDP-N-acetylmuramoyl-L-alanyl-D-glutamate--2,6-diaminopimelate ligase (Chlamydia abortus (strain DSM 27085 / S26/3) (Chlamydophila abortus)).